A 910-amino-acid polypeptide reads, in one-letter code: Constitutive coactivator of peroxisome proliferator-activated receptor gamma (910 aa).

Disordered stretches follow at residues 333–416, 443–483, and 863–910; these read SDAE…VPMC, SEPR…ESRQ, and SHHA…WRRY. 3 stretches are compositionally biased toward basic and acidic residues: residues 335 to 351, 360 to 375, and 396 to 411; these read AESREEVPMCSDAESRQ, ESRREVPVYTDSEPRQ, and ESRREVPMCSDPEPRQ. Residues 872–890 show a composition bias toward polar residues; the sequence is QGSSYHRTGSGYSRSSQGQ. R885 bears the Omega-N-methylarginine mark. Over residues 901-910 the composition is skewed to basic and acidic residues; that stretch reads QYEHDQWRRY.

This sequence belongs to the constitutive coactivator of PPAR-gamma family. In terms of assembly, interacts with ESR1 and RXRA. Interacts with PPARG; in a ligand-independent manner. Widely expressed.

Its subcellular location is the nucleus. Functions as a transactivator of PPARG and ESR1. Functions in adipogenesis through PPARG activation. This chain is Constitutive coactivator of peroxisome proliferator-activated receptor gamma (FAM120B), found in Homo sapiens (Human).